The chain runs to 56 residues: Large ribosomal subunit protein bL33A (56 aa).

Belongs to the bacterial ribosomal protein bL33 family.

This is Large ribosomal subunit protein bL33A from Nocardia farcinica (strain IFM 10152).